The following is a 301-amino-acid chain: Large ribosomal subunit protein uL18y (301 aa).

Residues 247–267 (RAEPNHKKTEKSAPKEHKRYN) are disordered. The segment covering 249–261 (EPNHKKTEKSAPK) has biased composition (basic and acidic residues).

Belongs to the universal ribosomal protein uL18 family. Component of the large ribosomal subunit (LSU).

The protein localises to the cytoplasm. The protein resides in the nucleus. Its subcellular location is the nucleolus. It localises to the nucleoplasm. In terms of biological role, component of the ribosome, a large ribonucleoprotein complex responsible for the synthesis of proteins in the cell. The small ribosomal subunit (SSU) binds messenger RNAs (mRNAs) and translates the encoded message by selecting cognate aminoacyl-transfer RNA (tRNA) molecules. The large subunit (LSU) contains the ribosomal catalytic site termed the peptidyl transferase center (PTC), which catalyzes the formation of peptide bonds, thereby polymerizing the amino acids delivered by tRNAs into a polypeptide chain. The nascent polypeptides leave the ribosome through a tunnel in the LSU and interact with protein factors that function in enzymatic processing, targeting, and the membrane insertion of nascent chains at the exit of the ribosomal tunnel. Seems involved in the regulation of cell proliferation. Essential in leaf polarity establishment, probably having a role for translation in leaf dorsoventral patterning to specify leaf adaxial identity. The polypeptide is Large ribosomal subunit protein uL18y (Arabidopsis thaliana (Mouse-ear cress)).